The primary structure comprises 1235 residues: MILDADYITEDGKPIIRIFKKENGEFKVEYDRNFRPYIYALLRDDSAIDEIKKITAQRHGKVVRIVETEKIQRKFLGRPIEVWKLYLEHPQDVPAIRDKIREHPAVVDIFEYDIPFAKRYLIDKGLTPMEGNEKLTFLAVDIETLYHEGEEFGKGPVIMISYADEEGAKVITWKKIDLPYVEVVSSEREMIKRLIRVIKEKDPDVIITYNGDNFDFPYLLKRAEKLGIKLLLGRDNSEPKMQKMGDSLAVEIKGRIHFDLFPVIRRTINLPTYTLEAVYEAIFGKPKEKVYADEIAKAWETGEGLERVAKYSMEDAKVTYELGREFFPMEAQLARLVGQPVWDVSRSSTGNLVEWFLLRKAYERNELAPNKPDEKEYERRLRESYEGGYVKEPEKGLWEGIVSLDFRSLYPSIIITHNVSPDTLNREGCEEYDVAPKVGHRFCKDFPGFIPSLLGQLLEERQKIKKRMKESKDPVEKKLLDYRQRAIKILANSILPDEWLPIVENEKVRFVKIGDFIDREIEENAERVKRDGETEILEVKDLKALSFNRETKKSELKKVKALIRHRYSGKVYSIKLKSGRRIKITSGHSLFSVKNGKLVKVRGDELKPGDLVVVPGRLKLPESKQVLNLVELLLKLPEEETSNIVMMIPVKGRKNFFKGMLKTLYWIFGEGERPRTAGRYLKHLERLGYVKLKRRGCEVLDWESLKRYRKLYETLIKNLKYNGNSRAYMVEFNSLRDVVSLMPIEELKEWIIGEPRGPKIGTFIDVDDSFAKLLGYYISSGDVEKDRVKFHSKDQNVLEDIAKLAEKLFGKVRRGRGYIEVSGKISHAIFRVLAEGKRIPEFIFTSPMDIKVAFLKGLNGNAEELTFSTKSELLVNQLILLLNSIGVSDIKIEHEKGVYRVYINKKESSNGDIVLDSVESIEVEKYEGYVYDLSVEDNENFLVGFGLLYAHNSYYGYYGYAKARWYCKECAESVTAWGRQYIDLVRRELEARGFKVLYIDTDGLYATIPGVKDWEEVKRRALEFVDYINSKLPGVLELEYEGFYARGFFVTKKKYALIDEEGKIVTRGLEIVRRDWSEIAKETQARVLEAILKHGNVEEAVKIVKDVTEKLTNYEVPPEKLVIYEQITRPINEYKAIGPHVAVAKRLMARGIKVKPGMVIGYIVLRGDGPISKRAISIEEFDPRKHKYDAEYYIENQVLPAVERILKAFGYKREDLRWQKTKQVGLGAWIKVKKS.

Residues 773–887 (LLGYYISSGD…LILLLNSIGV (115 aa)) form the DOD-type homing endonuclease domain.

It belongs to the DNA polymerase type-B family. In terms of processing, this protein undergoes a protein self splicing that involves a post-translational excision of the intervening region (intein) followed by peptide ligation.

It catalyses the reaction DNA(n) + a 2'-deoxyribonucleoside 5'-triphosphate = DNA(n+1) + diphosphate. The polypeptide is DNA polymerase (pol) (Pyrococcus horikoshii (strain ATCC 700860 / DSM 12428 / JCM 9974 / NBRC 100139 / OT-3)).